A 1021-amino-acid chain; its full sequence is MGKGVGRDKYEPAAVSEHGDKKKAKKERDMDELKKEVSMDDHKLSLDELHRKYGTDLSRGLTTARAAEILARDGPNALTPPPTTPEWVKFCRQLFGGFSMLLWIGAVLCFLAYGIQAATEEEPQNDNLYLGVVLSAVVIITGCFSYYQEAKSSKIMESFKNMVPQQALVIRNGEKMSINAEEVVVGDLVEVKGGDRIPADLRIISANGCKVDNSSLTGESEPQTRSPDFTNENPLETRNIAFFSTNCVEGTARGIVVYTGDRTVMGRIATLASGLEGGQTPIAAEIEHFIHIITGVAVFLGVSFFILSLILEYTWLEAVIFLIGIIVANVPEGLLATVTVCLTLTAKRMARKNCLVKNLEAVETLGSTSTICSDKTGTLTQNRMTVAHMWFDNQIHEADTTENQSGVSFDKTSATWLALSRIAGLCNRAVFQANQDNLPILKRAVAGDASESALLKCIEVCCGSVKEMRERYTKIVEIPFNSTNKYQLSIHKNANAGEPRHLLVMKGAPERILDRCSSILIHGKEQPLDEELKDAFQNAYLELGGLGERVLGFCHLLLPDEQFPEGFQFDTDDVNFPVDNLCFVGLISMIDPPRAAVPDAVGKCRSAGIKVIMVTGDHPITAKAIAKGVGIISEGNETVEDIAARLNIPVSQVNPRDARACVVHGSDLKDMTPEQLDDILKYHTEIVFARTSPQQKLIIVEGCQRQGAIVAVTGDGVNDSPALKKADIGVAMGIAGSDVSKQAADMILLDDNFASIVTGVEEGRLIFDNLKKSIAYTLTSNIPEITPFLIFIIANIPLPLGTVTILCIDLGTDMVPAISLAYEQAESDIMKRQPRNPQTDKLVNERLISMAYGQIGMIQALGGFFTYFVIMAENGFLPNHLLGIRVTWDDRWINDVEDSYGQQWTYEQRKIVEFTCHTAFFVSIVVVQWADLVICKTRRNSVFQQGMKNKILIFGLFEETALAAFLSYCPGMGVALRMYPLKPTWWFCAFPYSLLIFVYDEVRKLIIRRRPGGWVEKETYY.

A propeptide spanning residues 1 to 5 (MGKGV) is cleaved from the precursor. Over residues 1–11 (MGKGVGRDKYE) the composition is skewed to basic and acidic residues. The interval 1–36 (MGKGVGRDKYEPAAVSEHGDKKKAKKERDMDELKKE) is disordered. Residues 6–85 (GRDKYEPAAV…NALTPPPTTP (80 aa)) are Cytoplasmic-facing. N6-acetyllysine is present on Lys9. Residue Tyr10 is modified to Phosphotyrosine. A Phosphoserine; by PKC modification is found at Ser16. The residue at position 21 (Lys21) is an N6-acetyllysine. A compositionally biased stretch (basic and acidic residues) spans 26 to 36 (KERDMDELKKE). Residues Ser38 and Ser45 each carry the phosphoserine modification. The segment at 80–82 (PPP) is phosphoinositide-3 kinase binding. Residues 86–106 (EWVKFCRQLFGGFSMLLWIGA) traverse the membrane as a helical segment. At 107-129 (VLCFLAYGIQAATEEEPQNDNLY) the chain is on the extracellular side. A helical transmembrane segment spans residues 130 to 150 (LGVVLSAVVIITGCFSYYQEA). Over 151 to 286 (KSSKIMESFK…GGQTPIAAEI (136 aa)) the chain is Cytoplasmic. Position 226 is a phosphoserine (Ser226). Tyr258 carries the post-translational modification Phosphotyrosine. Residues 287–306 (EHFIHIITGVAVFLGVSFFI) traverse the membrane as a helical segment. Topologically, residues 307 to 318 (LSLILEYTWLEA) are extracellular. Residues 319-336 (VIFLIGIIVANVPEGLLA) form a helical membrane-spanning segment. The Cytoplasmic segment spans residues 337-770 (TVTVCLTLTA…EEGRLIFDNL (434 aa)). Asp374 functions as the 4-aspartylphosphate intermediate in the catalytic mechanism. 2 positions are modified to phosphoserine: Ser450 and Ser482. Lys485 serves as a coordination point for ATP. The residue at position 540 (Tyr540) is a Phosphotyrosine. Residues 594–715 (RAAVPDAVGK…QGAIVAVTGD (122 aa)) are mediates interaction with SCN7A. Ser666 bears the Phosphoserine mark. Positions 715 and 719 each coordinate Mg(2+). The chain crosses the membrane as a helical span at residues 771 to 790 (KKSIAYTLTSNIPEITPFLI). Topologically, residues 791-800 (FIIANIPLPL) are extracellular. The chain crosses the membrane as a helical span at residues 801–821 (GTVTILCIDLGTDMVPAISLA). The Cytoplasmic portion of the chain corresponds to 822-841 (YEQAESDIMKRQPRNPQTDK). A helical transmembrane segment spans residues 842–864 (LVNERLISMAYGQIGMIQALGGF). The Extracellular portion of the chain corresponds to 865-916 (FTYFVIMAENGFLPNHLLGIRVTWDDRWINDVEDSYGQQWTYEQRKIVEFTC). The helical transmembrane segment at 917–936 (HTAFFVSIVVVQWADLVICK) threads the bilayer. The Cytoplasmic segment spans residues 937-949 (TRRNSVFQQGMKN). Ser941 bears the Phosphoserine; by PKA mark. A helical membrane pass occupies residues 950-968 (KILIFGLFEETALAAFLSY). The Extracellular portion of the chain corresponds to 969-983 (CPGMGVALRMYPLKP). A helical membrane pass occupies residues 984–1004 (TWWFCAFPYSLLIFVYDEVRK). Residues 1005 to 1021 (LIIRRRPGGWVEKETYY) are Cytoplasmic-facing.

Belongs to the cation transport ATPase (P-type) (TC 3.A.3) family. Type IIC subfamily. As to quaternary structure, the sodium/potassium-transporting ATPase is composed of a catalytic alpha subunit, an auxiliary non-catalytic beta subunit and an additional regulatory subunit. Interacts with regulatory subunit FXYD1. Interacts with regulatory subunit FXYD3. Interacts with SIK1. Interacts with SLC35G1 and STIM1. Interacts with CLN3; this interaction regulates the sodium/potassium-transporting ATPase complex localization at the plasma membrane. Interacts with SCN7A; activates ATP1A1 P-type sodium:potassium-exchanging transporter activity which indirectly signals to nearby neurons to regulate sodium homeostasis. Post-translationally, phosphorylation on Tyr-10 modulates pumping activity. Phosphorylation of Ser-941 by PKA modulates the response of ATP1A1 to PKC. Dephosphorylation by protein phosphatase 2A (PP2A) following increases in intracellular sodium, leading to increase catalytic activity.

Its subcellular location is the cell membrane. The protein resides in the basolateral cell membrane. It localises to the sarcolemma. The protein localises to the cell projection. It is found in the axon. Its subcellular location is the melanosome. The catalysed reaction is K(+)(out) + Na(+)(in) + ATP + H2O = K(+)(in) + Na(+)(out) + ADP + phosphate + H(+). This is the catalytic component of the active enzyme, which catalyzes the hydrolysis of ATP coupled with the exchange of sodium and potassium ions across the plasma membrane. This action creates the electrochemical gradient of sodium and potassium ions, providing the energy for active transport of various nutrients. Could also be part of an osmosensory signaling pathway that senses body-fluid sodium levels and controls salt intake behavior as well as voluntary water intake to regulate sodium homeostasis. The polypeptide is Sodium/potassium-transporting ATPase subunit alpha-1 (ATP1A1) (Bos taurus (Bovine)).